Reading from the N-terminus, the 348-residue chain is Lysophosphatidic acid receptor 2 (348 aa).

The Extracellular segment spans residues Met-1–Val-30. N-linked (GlcNAc...) asparagine glycosylation is found at Asn-7 and Asn-15. Residues Val-31–Ile-51 traverse the membrane as a helical segment. The Cytoplasmic portion of the chain corresponds to Ala-52–Tyr-66. The helical transmembrane segment at Leu-67–Phe-87 threads the bilayer. Residues His-88–Arg-104 are Extracellular-facing. A helical membrane pass occupies residues Gln-105 to Val-124. The Cytoplasmic segment spans residues Glu-125–Val-144. Residues Val-145–Phe-165 traverse the membrane as a helical segment. The Extracellular segment spans residues Trp-166–Ser-185. Residues Tyr-186–Thr-206 traverse the membrane as a helical segment. Topologically, residues Arg-207–Thr-239 are cytoplasmic. The chain crosses the membrane as a helical span at residues Val-240 to Leu-260. Over Asp-261 to Val-270 the chain is Extracellular. Residues Leu-271–Val-291 form a helical membrane-spanning segment. Topologically, residues Tyr-292–Leu-348 are cytoplasmic. The S-palmitoyl cysteine moiety is linked to residue Cys-308. Residues Asp-345–Leu-348 carry the PDZ-binding motif.

It belongs to the G-protein coupled receptor 1 family. Interacts with SLC9A3R2/NHERF2, MAGI3 and PLCB3. Interacts with RALA and GRK2. Most abundantly expressed in testes, kidney, and embryonic brain. Other organs also express the transcript, including heart, lung, spleen, thymus, stomach, and adult brain. Several have little or no expression, including liver, small intestine, and skeletal muscle.

The protein resides in the cell surface. Its subcellular location is the cell membrane. In terms of biological role, receptor for lysophosphatidic acid (LPA), a mediator of diverse cellular activities. Seems to be coupled to the G(i)/G(o), G(12)/G(13), and G(q) families of heteromeric G proteins. Plays a key role in phospholipase C-beta (PLC-beta) signaling pathway Stimulates phospholipase C (PLC) activity in a manner that is independent of RALA activation. This Mus musculus (Mouse) protein is Lysophosphatidic acid receptor 2.